A 101-amino-acid polypeptide reads, in one-letter code: Large ribosomal subunit protein eL21 (101 aa).

The segment covering 1–18 (MVKHSKGYRTRSRSLLRK) has biased composition (basic residues). The interval 1-24 (MVKHSKGYRTRSRSLLRKSPRERG) is disordered.

Belongs to the eukaryotic ribosomal protein eL21 family.

The protein is Large ribosomal subunit protein eL21 (rpl21e) of Saccharolobus solfataricus (strain ATCC 35092 / DSM 1617 / JCM 11322 / P2) (Sulfolobus solfataricus).